The following is a 201-amino-acid chain: ATP-dependent dethiobiotin synthetase BioD (201 aa).

11-16 is an ATP binding site; that stretch reads DVGKTH. Residue Thr-15 participates in Mg(2+) binding. Lys-31 is an active-site residue. Residues Asp-40 and 93–96 contribute to the ATP site; that span reads ELAG. Mg(2+) contacts are provided by Asp-40 and Glu-93.

Belongs to the dethiobiotin synthetase family. Homodimer. Mg(2+) is required as a cofactor.

It localises to the cytoplasm. It catalyses the reaction (7R,8S)-7,8-diammoniononanoate + CO2 + ATP = (4R,5S)-dethiobiotin + ADP + phosphate + 3 H(+). It functions in the pathway cofactor biosynthesis; biotin biosynthesis; biotin from 7,8-diaminononanoate: step 1/2. In terms of biological role, catalyzes a mechanistically unusual reaction, the ATP-dependent insertion of CO2 between the N7 and N8 nitrogen atoms of 7,8-diaminopelargonic acid (DAPA, also called 7,8-diammoniononanoate) to form a ureido ring. The polypeptide is ATP-dependent dethiobiotin synthetase BioD (Campylobacter jejuni subsp. jejuni serotype O:6 (strain 81116 / NCTC 11828)).